The chain runs to 127 residues: MFRTMLGGKIHRATVTEADLNYVGSITVDQDLLDAAGIYPNEKVAIVNNNNGERFETYTIAGKRGSGVICLNGAAARLVQKSDIVIIMSYVQLSEPEIAAHEPKVVLVDGNNKIRDIISYEPPHTVL.

Ser25 (schiff-base intermediate with substrate; via pyruvic acid) is an active-site residue. At Ser25 the chain carries Pyruvic acid (Ser). Thr57 is a binding site for substrate. Tyr58 functions as the Proton donor in the catalytic mechanism. Position 73 to 75 (73 to 75 (GAA)) interacts with substrate.

This sequence belongs to the PanD family. As to quaternary structure, heterooctamer of four alpha and four beta subunits. Pyruvate is required as a cofactor. Post-translationally, is synthesized initially as an inactive proenzyme, which is activated by self-cleavage at a specific serine bond to produce a beta-subunit with a hydroxyl group at its C-terminus and an alpha-subunit with a pyruvoyl group at its N-terminus.

The protein resides in the cytoplasm. It carries out the reaction L-aspartate + H(+) = beta-alanine + CO2. It functions in the pathway cofactor biosynthesis; (R)-pantothenate biosynthesis; beta-alanine from L-aspartate: step 1/1. Functionally, catalyzes the pyruvoyl-dependent decarboxylation of aspartate to produce beta-alanine. The sequence is that of Aspartate 1-decarboxylase from Neisseria meningitidis serogroup A / serotype 4A (strain DSM 15465 / Z2491).